Here is a 342-residue protein sequence, read N- to C-terminus: Aristolochene synthase prx2 (342 aa).

Asp115, Asn244, Ser248, and Glu252 together coordinate Mg(2+). Residues Arg340 and Tyr341 each coordinate (2E,6E)-farnesyl diphosphate.

This sequence belongs to the terpene synthase family. Homodimer. The cofactor is Mg(2+).

The catalysed reaction is (2E,6E)-farnesyl diphosphate = (+)-aristolochene + diphosphate. Its pathway is sesquiterpene biosynthesis; aristolochene biosynthesis; aristolochene from farnesyl diphosphate: step 1/1. Aristolochene synthase; part of the gene cluster that mediates the biosynthesis of PR-toxin, a bicyclic sesquiterpene belonging to the eremophilane class and acting as a mycotoxin. The first step of the pathway is catalyzed by the aristolochene synthase which performs the cyclization of trans,trans-farnesyl diphosphate (FPP) to the bicyclic sesquiterpene aristolochene. Following the formation of aristolochene, the non-oxygenated aristolochene is converted to the trioxygenated intermediate eremofortin B, via 7-epi-neopetasone. This conversion appears to involve three enzymes, a hydroxysterol oxidase-like enzyme, the quinone-oxidase prx3 that forms the quinone-type-structure in the bicyclic nucleus of aristolochene with the C8-oxo group and the C-3 hydroxyl group, and the P450 monooxygenase prx9 that introduces the epoxide at the double bond between carbons 1 and 2. No monoxy or dioxy-intermediates have been reported to be released to the broth, so these three early oxidative reactions may be coupled together. Eremofortin B is further oxidized by another P450 monooxygenase, that introduces a second epoxide between carbons 7 and 11 prior to acetylation to eremofortin A by the acetyltransferase prx11. The second epoxidation may be performed by a second P450 monooxygenase. After the acetylation step, the conversion of eremofortin A to eremofortin C and then to PR-toxin requires only two enzymes. First the conversion of eremofortin A to eremofortin C proceeds by oxidation of the side chain of the molecule at C-12 and is catalyzed by the short-chain oxidoreductase prx1. The cytochrome P450 monooxygenase prx8 also plays a role in this step. The primary alcohol formed at C-12 is finally oxidized by the short-chain alcohol dehydrogenase prx4 that forms PR-toxin. The protein is Aristolochene synthase prx2 of Penicillium rubens (strain ATCC 28089 / DSM 1075 / NRRL 1951 / Wisconsin 54-1255) (Penicillium chrysogenum).